The sequence spans 1454 residues: Beta-1,3-glucan-binding protein (1454 aa).

Residues 1–197 (MSFDLTTPFD…KRSLEMRMMN (197 aa)) constitute a propeptide that is removed on maturation. 8 N-linked (GlcNAc...) asparagine glycosylation sites follow: asparagine 33, asparagine 55, asparagine 185, asparagine 571, asparagine 592, asparagine 825, asparagine 882, and asparagine 1153.

Belongs to the glycosyl hydrolase 16 family. As to quaternary structure, monomer. In terms of tissue distribution, expressed in the hepatopancreas and secreted into the hemolymph. Expressed at lower levels in muscle, pleopod and gill tissue.

Its subcellular location is the secreted. In terms of biological role, involved in the recognition of invading microorganisms. Binds specifically to beta-1,3-glucan and activates the prophenoloxidase cascade. This chain is Beta-1,3-glucan-binding protein, found in Penaeus vannamei (Whiteleg shrimp).